Consider the following 557-residue polypeptide: Hepatocyte nuclear factor 1-beta (557 aa).

The interval 1 to 31 (MVSKLTSLQQELLSALLSSGVTKEVLVQALE) is dimerization. An HNF-p1 domain is found at 1–32 (MVSKLTSLQQELLSALLSSGVTKEVLVQALEE). A phosphoserine mark is found at serine 49, serine 52, serine 75, and serine 80. The interval 64–85 (TLTNGHAKGRLSGDEGSEDGDD) is disordered. The POU-specific atypical domain maps to 93-188 (KELQALNTEE…ILRQFNQTVQ (96 aa)). The homeobox; HNF1-type DNA-binding region spans 231-311 (MRRNRFKWGP…NRRKEEAFRQ (81 aa)). The segment at 324–370 (HSLNPLLSHGSPHHQPSSSPPNKLSGVRYSQQGNNEVTSSSTISHHG) is disordered. Residues 328-344 (PLLSHGSPHHQPSSSPP) are compositionally biased toward low complexity. Residues 351–370 (RYSQQGNNEVTSSSTISHHG) show a composition bias toward polar residues.

The protein belongs to the HNF1 homeobox family. As to quaternary structure, binds DNA as a dimer. Can form homodimer or heterodimer with HNF1-alpha. Interacts (via HNF-p1 domain) with PCBD1; the interaction increases its transactivation activity.

The protein resides in the nucleus. Its function is as follows. Transcription factor that binds to the inverted palindrome 5'-GTTAATNATTAAC-3'. Binds to the FPC element in the cAMP regulatory unit of the PLAU gene. Transcriptional activity is increased by coactivator PCBD1. This Pongo abelii (Sumatran orangutan) protein is Hepatocyte nuclear factor 1-beta (HNF1B).